Consider the following 103-residue polypeptide: Large ribosomal subunit protein uL23 (103 aa).

This sequence belongs to the universal ribosomal protein uL23 family. In terms of assembly, part of the 50S ribosomal subunit. Contacts protein L29, and trigger factor when it is bound to the ribosome.

One of the early assembly proteins it binds 23S rRNA. One of the proteins that surrounds the polypeptide exit tunnel on the outside of the ribosome. Forms the main docking site for trigger factor binding to the ribosome. The polypeptide is Large ribosomal subunit protein uL23 (Chlorobaculum tepidum (strain ATCC 49652 / DSM 12025 / NBRC 103806 / TLS) (Chlorobium tepidum)).